Consider the following 355-residue polypeptide: Small ribosomal subunit protein uS2 (355 aa).

The protein belongs to the universal ribosomal protein uS2 family.

In Methylorubrum extorquens (strain CM4 / NCIMB 13688) (Methylobacterium extorquens), this protein is Small ribosomal subunit protein uS2.